We begin with the raw amino-acid sequence, 368 residues long: Chorismate synthase (368 aa).

R46 is a binding site for NADP(+). FMN-binding positions include 124-126 (RAS), G284, 299-303 (KPTPS), and R326.

It belongs to the chorismate synthase family. Requires FMNH2 as cofactor.

It carries out the reaction 5-O-(1-carboxyvinyl)-3-phosphoshikimate = chorismate + phosphate. It participates in metabolic intermediate biosynthesis; chorismate biosynthesis; chorismate from D-erythrose 4-phosphate and phosphoenolpyruvate: step 7/7. Functionally, catalyzes the anti-1,4-elimination of the C-3 phosphate and the C-6 proR hydrogen from 5-enolpyruvylshikimate-3-phosphate (EPSP) to yield chorismate, which is the branch point compound that serves as the starting substrate for the three terminal pathways of aromatic amino acid biosynthesis. This reaction introduces a second double bond into the aromatic ring system. This Pyrobaculum aerophilum (strain ATCC 51768 / DSM 7523 / JCM 9630 / CIP 104966 / NBRC 100827 / IM2) protein is Chorismate synthase.